We begin with the raw amino-acid sequence, 365 residues long: MALDLRIGNKYRIGRKIGSGSFGDIYLGTNVVSGEEVAIKLESTRAKHPQLEYEYRVYRILSGGVGIPFVRWFGVECDYNAMVMDLLGPSLEDLFNFCNRKFSLKTVLLLADQLISRIEFIHSKSFLHRDIKPDNFLMGIGKRGNQVNIIDFGLAKKYRDHKTHLHIPYRENKNLTGTARYASINTHLGIEQSRRDDLESLGYVLVYFCRGSLPWQGLKATTKKQKYEKIMEKKISTPTEVLCRGFPQEFSIYLNYTRSLRFDDKPDYAYLRKLFRDLFCRQSYEFDYMFDWTLKRKTQQDQQHQQQLQQQLSATPQAINPPPERSSFRNYQKQNFDEKGGDINTTVPVINDPSATGAQYINRPN.

One can recognise a Protein kinase domain in the interval 11-279 (YRIGRKIGSG…YLRKLFRDLF (269 aa)). Residues 17-25 (IGSGSFGDI) and Lys-40 contribute to the ATP site. Asp-130 acts as the Proton acceptor in catalysis. Residues 301–311 (DQQHQQQLQQQ) show a composition bias toward low complexity. The interval 301 to 365 (DQQHQQQLQQ…TGAQYINRPN (65 aa)) is disordered. The segment covering 343–365 (INTTVPVINDPSATGAQYINRPN) has biased composition (polar residues).

This sequence belongs to the protein kinase superfamily. CK1 Ser/Thr protein kinase family. Casein kinase I subfamily.

It is found in the nucleus. It catalyses the reaction L-seryl-[protein] + ATP = O-phospho-L-seryl-[protein] + ADP + H(+). The catalysed reaction is L-threonyl-[protein] + ATP = O-phospho-L-threonyl-[protein] + ADP + H(+). Its function is as follows. Involved in DNA repair. Has a probable role in repairing alkylated DNA and may regulate the activity of protein(s) involved in double strand break repair caused by gamma rays. The chain is Casein kinase I homolog hhp1 (hhp1) from Schizosaccharomyces pombe (strain 972 / ATCC 24843) (Fission yeast).